Consider the following 267-residue polypeptide: Putative F-box protein At1g61060 (267 aa).

An F-box domain is found at 15-63 (DYFDAIHVDLFTAKILSKLPVKSIAQCRCVSKLWSSQIRRPYYNMLFPI).

The chain is Putative F-box protein At1g61060 from Arabidopsis thaliana (Mouse-ear cress).